Consider the following 362-residue polypeptide: Type-1 angiotensin II receptor A (362 aa).

The Extracellular segment spans residues 1 to 26 (MSNASTVETSDVERIAVNCSKSGMHN). Residues N3 and N18 are each glycosylated (N-linked (GlcNAc...) asparagine). Cystine bridges form between C19–C273 and C102–C181. A helical membrane pass occupies residues 27-56 (YIFIAIPIIYSTIFVVGVFGNSMVVIVIYS). Residues 57–62 (YMKMKT) are Cytoplasmic-facing. A helical membrane pass occupies residues 63–90 (VASIFLMNLALSDLCFVITLPLWAAYTA). At 91–99 (MHYHWPFGN) the chain is on the extracellular side. A helical transmembrane segment spans residues 100-126 (FLCKVASTAITLNLYTTVFLLTCLSID). Residues 127-142 (RYSAIVHPMKSRIWRT) are Cytoplasmic-facing. Residues 143-166 (AMVARLTCVGIWLVAFLASMPSII) traverse the membrane as a helical segment. The Extracellular portion of the chain corresponds to 167 to 191 (YRQIYLFHDTNQTVCAIVYDSGHIY). R168 is a binding site for angiotensin II. N177 is a glycosylation site (N-linked (GlcNAc...) asparagine). 2 residues coordinate angiotensin II: Y185 and K200. The helical transmembrane segment at 192–217 (FMVGMSLAKNIVGFLIPFLIILTSYT) threads the bilayer. Residues 218-238 (LIGKTLKEVYRAQRARNDDIF) lie on the Cytoplasmic side of the membrane. Residues 239 to 267 (KMIVAVVLLFFFCWIPYQVFTFLDVLIQM) form a helical membrane-spanning segment. Over 268–277 (DVIQNCKMYD) the chain is Extracellular. The helical transmembrane segment at 278–303 (IVDTGMPITICIAYFNSCLNPFLYGF) threads the bilayer. At 304–362 (FGKNFRKHFLQLIKYIPPKMRTHASVNTKSSLVSSSLSDTKRASKKIALQMTDNEEHCK) the chain is on the cytoplasmic side. The S-palmitoyl cysteine moiety is linked to residue C361.

Belongs to the G-protein coupled receptor 1 family. C-terminal Ser or Thr residues may be phosphorylated. Expressed in lung, liver, kidney, and spleen, with highest expression in the heart.

It localises to the cell membrane. Functionally, receptor for angiotensin II, a vasoconstricting peptide, which acts as a key regulator of blood pressure and sodium retention by the kidney. The activated receptor in turn couples to G-alpha proteins G(q) (GNAQ, GNA11, GNA14 or GNA15) and thus activates phospholipase C and increases the cytosolic Ca(2+) concentrations, which in turn triggers cellular responses such as stimulation of protein kinase C. This chain is Type-1 angiotensin II receptor A (agtr1-a), found in Xenopus laevis (African clawed frog).